The chain runs to 333 residues: Malate dehydrogenase (333 aa).

NAD(+)-binding positions include 10–15 (GGGQIG) and Asp34. Substrate is bound by residues Arg83 and Arg89. NAD(+) contacts are provided by residues Asn96 and 119 to 121 (ITN). Positions 121 and 152 each coordinate substrate. The Proton acceptor role is filled by His176.

This sequence belongs to the LDH/MDH superfamily. MDH type 3 family.

The enzyme catalyses (S)-malate + NAD(+) = oxaloacetate + NADH + H(+). In terms of biological role, catalyzes the reversible oxidation of malate to oxaloacetate. The sequence is that of Malate dehydrogenase from Parvibaculum lavamentivorans (strain DS-1 / DSM 13023 / NCIMB 13966).